A 151-amino-acid chain; its full sequence is uncharacterized protein (151 aa).

One can recognise an N-acetyltransferase domain in the interval 3–151; the sequence is IKIDDLTGRQ…PNSVFMTKKL (149 aa).

The protein belongs to the acetyltransferase family.

This is an uncharacterized protein from Bacillus subtilis (strain 168).